Consider the following 37-residue polypeptide: Large ribosomal subunit protein bL36c (37 aa).

Belongs to the bacterial ribosomal protein bL36 family.

It is found in the plastid. The protein resides in the chloroplast. This Mesembryanthemum crystallinum (Common ice plant) protein is Large ribosomal subunit protein bL36c.